We begin with the raw amino-acid sequence, 330 residues long: Probable WRKY transcription factor 74 (330 aa).

The segment at residues 256–322 is a DNA-binding region (WRKY); it reads KIADIPPDEY…YEGEHNHSRI (67 aa).

It localises to the nucleus. Its function is as follows. Transcription factor. Interacts specifically with the W box (5'-(T)TGAC[CT]-3'), a frequently occurring elicitor-responsive cis-acting element. The polypeptide is Probable WRKY transcription factor 74 (WRKY74) (Arabidopsis thaliana (Mouse-ear cress)).